A 195-amino-acid chain; its full sequence is Putative Tricorn-like protease N-terminal subunit (195 aa).

This sequence belongs to the peptidase S41B family.

It is found in the cytoplasm. In terms of biological role, degrades oligopeptides in a sequential manner. In Sulfurisphaera tokodaii (strain DSM 16993 / JCM 10545 / NBRC 100140 / 7) (Sulfolobus tokodaii), this protein is Putative Tricorn-like protease N-terminal subunit (triN).